Reading from the N-terminus, the 240-residue chain is Protein CDV3 homolog A (240 aa).

Residues 1–15 (MAEPQEKSLDDFFAK) show a composition bias toward basic and acidic residues. The interval 1–204 (MAEPQEKSLD…TESRREKEME (204 aa)) is disordered. Alanine 2 bears the N-acetylalanine mark. Residues 27-52 (SGSAAGSRGSARPPDGAPSSSSSMSG) show a composition bias toward low complexity. The segment covering 57-73 (VKKEKSGKSDNPDQLQE) has biased composition (basic and acidic residues). Polar residues-rich tracts occupy residues 127 to 141 (DKSS…QAQA) and 181 to 192 (SDTQFPSLQATA). Basic and acidic residues predominate over residues 193–204 (KHTESRREKEME).

The protein belongs to the CDV3 family.

The protein localises to the cytoplasm. In Xenopus laevis (African clawed frog), this protein is Protein CDV3 homolog A (cdv3-a).